The following is a 217-amino-acid chain: MAKAIQSSMWREFGLMCTVGIGDNMLLSKLALDLESKKTKSGIARWRYEDVPNRLWKVRPLSKMWGIGGRMERNLNRMGISTVGQLAKFPLELLEKKFGIMGNQLYYHAHGIDLSEIGAPLMQGQISFGKSQILFRDYTKREEIKAVLLEICEEVARRARTYNKVGRTISLGIGYSKDELGGGFHRSKTIDFPTNITMDIYKCCLMFFNKFYSGKKQ.

Residues methionine 1 to glycine 68 form the UmuC domain.

Belongs to the DNA polymerase type-Y family.

The protein is DNA repair protein homolog YobH (yobH) of Bacillus subtilis (strain 168).